The following is a 436-amino-acid chain: MTTFSPREIVSELDRFIIGQKDAKRAVAIALRNRWRRQQLEGQMREEVMPKNILMIGPTGVGKTEISRRLARLAGAPFVKVEATKFTEVGYVGRDVEQIIRDLVEIAIGLVREKMREDVKARAHINAEERVLEALVGKTASPATRDSFRKKLRDGELDDKEIEIEVADTGNGGMPGFEIPGMPGANIGVLNINDMLSKAMGGKKTKSRKTTVKESYDLLVSDESDKLLDQDEVVRRALDATENDGIVFLDEIDKIAARSDISGGPSREGVQRDLLPLVEGTTVATKYGPVKTDHILFIASGAFHVSKPSDLLPELQGRLPIRVELRALEKQDFVRILTETEASLIKQYIALMKTEGVDLTFTDDAIDSLAGIAVDLNDSVENIGARRLQTVMERVLDEISYDAPDRNGTSVTIDAAYVEKHVGDLSRNTDLSRFIL.

ATP contacts are provided by residues Ile18, 60–65, Asp250, Glu314, and Arg386; that span reads GVGKTE.

This sequence belongs to the ClpX chaperone family. HslU subfamily. As to quaternary structure, a double ring-shaped homohexamer of HslV is capped on each side by a ring-shaped HslU homohexamer. The assembly of the HslU/HslV complex is dependent on binding of ATP.

The protein localises to the cytoplasm. Functionally, ATPase subunit of a proteasome-like degradation complex; this subunit has chaperone activity. The binding of ATP and its subsequent hydrolysis by HslU are essential for unfolding of protein substrates subsequently hydrolyzed by HslV. HslU recognizes the N-terminal part of its protein substrates and unfolds these before they are guided to HslV for hydrolysis. This is ATP-dependent protease ATPase subunit HslU from Mesorhizobium japonicum (strain LMG 29417 / CECT 9101 / MAFF 303099) (Mesorhizobium loti (strain MAFF 303099)).